The following is a 420-amino-acid chain: Protein TabA (420 aa).

Residue lysine 57 is modified to N6-(pyridoxal phosphate)lysine.

This sequence belongs to the Orn/Lys/Arg decarboxylase class-II family. The cofactor is pyridoxal 5'-phosphate.

Its function is as follows. Involved in tabtoxin production and pathogenicity. The chain is Protein TabA (tabA) from Pseudomonas amygdali pv. tabaci (Pseudomonas syringae pv. tabaci).